The primary structure comprises 388 residues: Palmitoyltransferase ZDHHC18-B (388 aa).

The tract at residues 1-33 (MKNREYQQIDPQALATPTPTPPPRSLPEHKPRR) is disordered. At 1-58 (MKNREYQQIDPQALATPTPTPPPRSLPEHKPRRARRKWEVFPGKNRFYCDGRIIVARQ) the chain is on the cytoplasmic side. A helical membrane pass occupies residues 59 to 79 (SGVLPLTLGLILLTSGLFFIF). At 80–87 (DCPFLVKH) the chain is on the lumenal side. Residues 88-108 (LTSCIPAIGGVLFVFVIISLL) form a helical membrane-spanning segment. Topologically, residues 109–205 (QTSFTDPGIL…GNCVGKRNYR (97 aa)) are cytoplasmic. Positions 162 to 212 (KYCFTCKIFRPPRTSHCSLCDNCVERFDHHCPWVGNCVGKRNYRFFYTFIV) constitute a DHHC domain. Residue cysteine 192 is the S-palmitoyl cysteine intermediate of the active site. A helical membrane pass occupies residues 206–226 (FFYTFIVSLSFLTAFIFGCVT). Residues 227-253 (THLALRSQGGNGLVNALQSSPASALEL) are Lumenal-facing. A helical transmembrane segment spans residues 254-274 (VVCFFSVWSILGLSGFHTYLV). Residues 275–388 (AANLTTNEDI…AISMQNHSTA (114 aa)) are Cytoplasmic-facing.

Belongs to the DHHC palmitoyltransferase family. ERF2/ZDHHC9 subfamily.

It localises to the golgi apparatus membrane. The catalysed reaction is L-cysteinyl-[protein] + hexadecanoyl-CoA = S-hexadecanoyl-L-cysteinyl-[protein] + CoA. Functionally, palmitoyltransferase that catalyzes the addition of palmitate onto various protein substrates, such as CGAS, HRAS and LCK. The polypeptide is Palmitoyltransferase ZDHHC18-B (Danio rerio (Zebrafish)).